The chain runs to 119 residues: Large ribosomal subunit protein uL22 (119 aa).

The protein belongs to the universal ribosomal protein uL22 family. Part of the 50S ribosomal subunit.

In terms of biological role, this protein binds specifically to 23S rRNA; its binding is stimulated by other ribosomal proteins, e.g. L4, L17, and L20. It is important during the early stages of 50S assembly. It makes multiple contacts with different domains of the 23S rRNA in the assembled 50S subunit and ribosome. The globular domain of the protein is located near the polypeptide exit tunnel on the outside of the subunit, while an extended beta-hairpin is found that lines the wall of the exit tunnel in the center of the 70S ribosome. This chain is Large ribosomal subunit protein uL22, found in Trichormus variabilis (strain ATCC 29413 / PCC 7937) (Anabaena variabilis).